The primary structure comprises 479 residues: MDYFGPHIFGYLIALLHFLGLIAAIHAVLTVRTAQGAIAWALSLLFMPYLTLIPYLVFGRSTFDAYIQARRQANVEMHKAINELNWRPWVEEALTARASKAYASLRAMPKLGRMPCLANNQVRLLVNGDATFEAIFNAIRRSHKAVLIQFFIIHDDDLGRRLQRLLLEKAAEGVSIHLLYDRIGSHSLPASYVQTLRDAGVQVHAFATRSGWLNRFQVNFRNHRKIVVVDGMLGFVGGHNVGDEYLGKKPPLAPWRDTHVQVSGPVVACLQESFAEDWFWAARELPPLILPDTYPDDGVLCQLLASGPADAYETCSLFFVEAIHAATERVWITSPYFIPDEAVFAALRLAVLRDVDVRILLPARPDHRIVYAASSLYAFEAVRAGVRVFRYQPGFLHQKVVLIDNEISAIGSANLDNRSFRLNFEVMLLTVDDDFATEVEHMLEADFAKAREIAKEESRQTHRLQQLGMRVARLISPIL.

The next 2 helical transmembrane spans lie at 8–28 (IFGYLIALLHFLGLIAAIHAV) and 38–58 (IAWALSLLFMPYLTLIPYLVF). 2 consecutive PLD phosphodiesterase domains span residues 218–245 (VNFRNHRKIVVVDGMLGFVGGHNVGDEY) and 392–419 (QPGFLHQKVVLIDNEISAIGSANLDNRS). Active-site residues include histidine 223, lysine 225, aspartate 230, histidine 397, lysine 399, and aspartate 404.

The protein belongs to the phospholipase D family. Cardiolipin synthase subfamily. ClsA sub-subfamily.

The protein resides in the cell inner membrane. It catalyses the reaction 2 a 1,2-diacyl-sn-glycero-3-phospho-(1'-sn-glycerol) = a cardiolipin + glycerol. Its function is as follows. Catalyzes the reversible phosphatidyl group transfer from one phosphatidylglycerol molecule to another to form cardiolipin (CL) (diphosphatidylglycerol) and glycerol. The polypeptide is Cardiolipin synthase A (Pseudomonas fluorescens (strain ATCC BAA-477 / NRRL B-23932 / Pf-5)).